Reading from the N-terminus, the 424-residue chain is 3-ketoacyl-CoA thiolase B, peroxisomal (424 aa).

The N-terminal 26 residues, 1–26 (MHRLQVVLGHLAGRSESSSALQAAPC), are a transit peptide targeting the peroxisome. The segment at 1 to 26 (MHRLQVVLGHLAGRSESSSALQAAPC) is PTS2-type peroxisomal targeting signal. Cysteine 123 serves as the catalytic Acyl-thioester intermediate. Residues lysine 173 and lysine 234 each carry the N6-acetyllysine modification. CoA contacts are provided by arginine 249, threonine 252, and serine 276. Cysteine 408 serves as the catalytic Proton donor/acceptor.

This sequence belongs to the thiolase-like superfamily. Thiolase family. Homodimer. Interacts (via PTS2-type peroxisomal targeting signal region) with PEX7; leading to its translocation into peroxisomes.

The protein localises to the peroxisome. The catalysed reaction is an acyl-CoA + acetyl-CoA = a 3-oxoacyl-CoA + CoA. The enzyme catalyses 2 acetyl-CoA = acetoacetyl-CoA + CoA. It carries out the reaction hexanoyl-CoA + acetyl-CoA = 3-oxooctanoyl-CoA + CoA. It catalyses the reaction tetradecanoyl-CoA + acetyl-CoA = 3-oxohexadecanoyl-CoA + CoA. The catalysed reaction is 3-oxohexadecanedioyl-CoA + CoA = tetradecanedioyl-CoA + acetyl-CoA. The enzyme catalyses 3-oxo-(6Z,9Z,12Z,15Z,18Z,21Z)-tetracosahexaenoyl-CoA + CoA = (4Z,7Z,10Z,13Z,16Z,19Z)-docosahexaenoyl-CoA + acetyl-CoA. It participates in lipid metabolism; peroxisomal fatty acid beta-oxidation. Its function is as follows. Responsible for the thiolytic cleavage of straight chain 3-keto fatty acyl-CoAs (3-oxoacyl-CoAs). Plays an important role in fatty acid peroxisomal beta-oxidation. Catalyzes the cleavage of short, medium, long, and very long straight chain 3-oxoacyl-CoAs. Medium chain straight 3-oxoacyl-CoAs are preferred substrates. This Rattus norvegicus (Rat) protein is 3-ketoacyl-CoA thiolase B, peroxisomal.